Reading from the N-terminus, the 158-residue chain is Cystin-1 (158 aa).

The segment at Met-1–Glu-146 is disordered. The N-myristoyl glycine moiety is linked to residue Gly-2. 2 stretches are compositionally biased toward low complexity: residues Glu-19–Gly-32 and Pro-39–Glu-52. A Ciliary targeting motif motif is present at residues Ala-29 to Gly-33. Over residues Asp-65 to Asp-75 the composition is skewed to basic and acidic residues.

As to quaternary structure, interacts (when myristoylated) with UNC119 and UNC119B; interaction is required for localization to cilium. In terms of tissue distribution, expressed at high levels in the kidney and pancreas. Moderate expression seen in the skeletal muscle, liver and heart. A weak expression seen in the brain, lung, uterus, prostate, testis, small intestine and colon.

The protein resides in the cell projection. The protein localises to the cilium membrane. It is found in the cytoplasm. It localises to the cytoskeleton. Its subcellular location is the cilium axoneme. This Homo sapiens (Human) protein is Cystin-1 (CYS1).